Reading from the N-terminus, the 237-residue chain is Necrosis-inducing protein NPP1 (237 aa).

Positions 1–19 (MNVLTFLIAAAVSLAVVQA) are cleaved as a signal peptide. The N-linked (GlcNAc...) asparagine glycan is linked to Asn-67. A Conserved undecapeptide motif motif is present at residues 103-113 (AIMYSWYFPKD). The Conserved heptapetpide motif motif lies at 120-126 (GHRHDWE).

This sequence belongs to the Necrosis inducing protein (NPP1) family.

It is found in the secreted. Its function is as follows. Secreted effector that acts as a pathogen-associated molecular pattern (PAMP) recognized by the plant immune system. Induces necrotic cell death and ethylene biosynthesis in parsley. Stimulates early induced host cellular responses implicated in elicitor signal transmission such as increased levels of cytoplasmic calcium, production of reactive oxygen species (ROS), and MAP kinase activation. Infiltration of NPP1 into leaves of Arabidopsis thaliana results in transcript accumulation of pathogenesis-related (PR) genes, production of ROS and ethylene, callose apposition, and hypersensitive response (HR)-like cell death. NPP1-mediated induction of the PR1 gene is salicylic acid-dependent, and requires both functional NDR1 and PAD4. This Phytophthora nicotianae (Potato buckeye rot agent) protein is Necrosis-inducing protein NPP1.